Reading from the N-terminus, the 192-residue chain is Peptidyl-prolyl cis-trans isomerase 1 (192 aa).

One can recognise a PPIase cyclophilin-type domain in the interval 25–188 (FFDVSIGEEP…KTVTIADCGE (164 aa)).

Belongs to the cyclophilin-type PPIase family.

It carries out the reaction [protein]-peptidylproline (omega=180) = [protein]-peptidylproline (omega=0). In terms of biological role, PPIases accelerate the folding of proteins. It catalyzes the cis-trans isomerization of proline imidic peptide bonds in oligopeptides. This chain is Peptidyl-prolyl cis-trans isomerase 1 (cyn-1), found in Caenorhabditis elegans.